Here is a 336-residue protein sequence, read N- to C-terminus: Small ribosomal subunit protein uS2 (336 aa).

Belongs to the universal ribosomal protein uS2 family.

The sequence is that of Small ribosomal subunit protein uS2 from Beijerinckia indica subsp. indica (strain ATCC 9039 / DSM 1715 / NCIMB 8712).